The sequence spans 584 residues: 2-succinyl-5-enolpyruvyl-6-hydroxy-3-cyclohexene-1-carboxylate synthase (584 aa).

This sequence belongs to the TPP enzyme family. MenD subfamily. Homodimer. Mg(2+) serves as cofactor. Mn(2+) is required as a cofactor. The cofactor is thiamine diphosphate.

It carries out the reaction isochorismate + 2-oxoglutarate + H(+) = 5-enolpyruvoyl-6-hydroxy-2-succinyl-cyclohex-3-ene-1-carboxylate + CO2. The protein operates within quinol/quinone metabolism; 1,4-dihydroxy-2-naphthoate biosynthesis; 1,4-dihydroxy-2-naphthoate from chorismate: step 2/7. It participates in quinol/quinone metabolism; menaquinone biosynthesis. In terms of biological role, catalyzes the thiamine diphosphate-dependent decarboxylation of 2-oxoglutarate and the subsequent addition of the resulting succinic semialdehyde-thiamine pyrophosphate anion to isochorismate to yield 2-succinyl-5-enolpyruvyl-6-hydroxy-3-cyclohexene-1-carboxylate (SEPHCHC). The chain is 2-succinyl-5-enolpyruvyl-6-hydroxy-3-cyclohexene-1-carboxylate synthase from Bacillus cereus (strain ATCC 14579 / DSM 31 / CCUG 7414 / JCM 2152 / NBRC 15305 / NCIMB 9373 / NCTC 2599 / NRRL B-3711).